Consider the following 335-residue polypeptide: Peroxidase 53 (335 aa).

The signal sequence occupies residues 1 to 30 (MAVTNLPTCDGLFIISLIVIVSSIFGTSSA). The residue at position 31 (Gln31) is a Pyrrolidone carboxylic acid. Residues Asn33 and Asn43 are each glycosylated (N-linked (GlcNAc...) asparagine). Disulfide bonds link Cys41–Cys121, Cys74–Cys79, Cys127–Cys329, and Cys206–Cys238. His72 (proton acceptor) is an active-site residue. Asp73, Val76, Gly78, Asp80, and Ser82 together coordinate Ca(2+). Asn165 carries N-linked (GlcNAc...) asparagine glycosylation. Pro169 serves as a coordination point for substrate. N-linked (GlcNAc...) asparagine glycosylation occurs at Asn177. His199 lines the heme b pocket. Thr200 serves as a coordination point for Ca(2+). N-linked (GlcNAc...) asparagine glycans are attached at residues Asn215, Asn227, and Asn241. Residues Asp251, Thr254, and Asp259 each coordinate Ca(2+). N-linked (GlcNAc...) asparagine glycosylation occurs at Asn297.

It belongs to the peroxidase family. Classical plant (class III) peroxidase subfamily. Ca(2+) is required as a cofactor. Heme b serves as cofactor. In terms of tissue distribution, mainly expressed in roots.

The protein resides in the secreted. It catalyses the reaction 2 a phenolic donor + H2O2 = 2 a phenolic radical donor + 2 H2O. In terms of biological role, removal of H(2)O(2), oxidation of toxic reductants, biosynthesis and degradation of lignin, suberization, auxin catabolism, response to environmental stresses such as wounding, pathogen attack and oxidative stress. These functions might be dependent on each isozyme/isoform in each plant tissue. Functionally, closely linked to lignin formation by showing monolignol substrate specificity. This Arabidopsis thaliana (Mouse-ear cress) protein is Peroxidase 53 (PER53).